The chain runs to 94 residues: Pyrimidine/purine nucleoside phosphorylase (94 aa).

It belongs to the nucleoside phosphorylase PpnP family.

It carries out the reaction a purine D-ribonucleoside + phosphate = a purine nucleobase + alpha-D-ribose 1-phosphate. The catalysed reaction is adenosine + phosphate = alpha-D-ribose 1-phosphate + adenine. The enzyme catalyses cytidine + phosphate = cytosine + alpha-D-ribose 1-phosphate. It catalyses the reaction guanosine + phosphate = alpha-D-ribose 1-phosphate + guanine. It carries out the reaction inosine + phosphate = alpha-D-ribose 1-phosphate + hypoxanthine. The catalysed reaction is thymidine + phosphate = 2-deoxy-alpha-D-ribose 1-phosphate + thymine. The enzyme catalyses uridine + phosphate = alpha-D-ribose 1-phosphate + uracil. It catalyses the reaction xanthosine + phosphate = alpha-D-ribose 1-phosphate + xanthine. In terms of biological role, catalyzes the phosphorolysis of diverse nucleosides, yielding D-ribose 1-phosphate and the respective free bases. Can use uridine, adenosine, guanosine, cytidine, thymidine, inosine and xanthosine as substrates. Also catalyzes the reverse reactions. The polypeptide is Pyrimidine/purine nucleoside phosphorylase (Pectobacterium atrosepticum (strain SCRI 1043 / ATCC BAA-672) (Erwinia carotovora subsp. atroseptica)).